The sequence spans 553 residues: Formate--tetrahydrofolate ligase (553 aa).

64 to 71 (TPAGEGKT) contacts ATP.

The protein belongs to the formate--tetrahydrofolate ligase family.

It carries out the reaction (6S)-5,6,7,8-tetrahydrofolate + formate + ATP = (6R)-10-formyltetrahydrofolate + ADP + phosphate. The protein operates within one-carbon metabolism; tetrahydrofolate interconversion. The chain is Formate--tetrahydrofolate ligase from Pseudothermotoga lettingae (strain ATCC BAA-301 / DSM 14385 / NBRC 107922 / TMO) (Thermotoga lettingae).